The primary structure comprises 475 residues: Maintenance of mitochondrial morphology protein 1 (475 aa).

Residues 1-14 (MSETFSPNLTFTEG) are Lumenal-facing. A helical transmembrane segment spans residues 15–35 (FVLGQASFLIILLLFIRYVVF). The Cytoplasmic segment spans residues 36 to 475 (SPSEQIDHEG…VTPGQVGTSR (440 aa)). Residues 80–278 (PAESSDWVNV…HPNHISLALP (199 aa)) form the SMP-LTD domain. Disordered stretches follow at residues 321–381 (NPVE…GQPQ) and 394–475 (SYPH…GTSR). Pro residues predominate over residues 341-351 (PPTPLVQPPGT). Composition is skewed to polar residues over residues 353–380 (PTLS…QGQP) and 394–403 (SYPHYNTYTL). Residues 442–464 (STTSSLTPSQSQSQFRFRGQFAS) show a composition bias toward low complexity.

Belongs to the MMM1 family. As to quaternary structure, homodimer. Component of the ER-mitochondria encounter structure (ERMES) or MDM complex, composed of MMM1, MDM10, MDM12 and MDM34. An MMM1 homodimer associates with one molecule of MDM12 on each side in a pairwise head-to-tail manner, and the SMP-LTD domains of MMM1 and MDM12 generate a continuous hydrophobic tunnel for phospholipid trafficking.

The protein resides in the endoplasmic reticulum membrane. Functionally, component of the ERMES/MDM complex, which serves as a molecular tether to connect the endoplasmic reticulum (ER) and mitochondria. Components of this complex are involved in the control of mitochondrial shape and protein biogenesis, and function in nonvesicular lipid trafficking between the ER and mitochondria. The MDM12-MMM1 subcomplex functions in the major beta-barrel assembly pathway that is responsible for biogenesis of all outer membrane beta-barrel proteins, and acts in a late step after the SAM complex. The MDM10-MDM12-MMM1 subcomplex further acts in the TOM40-specific pathway after the action of the MDM12-MMM1 complex. Essential for establishing and maintaining the structure of mitochondria and maintenance of mtDNA nucleoids. This chain is Maintenance of mitochondrial morphology protein 1, found in Cryptococcus neoformans var. neoformans serotype D (strain B-3501A) (Filobasidiella neoformans).